A 240-amino-acid chain; its full sequence is Cysteine-rich secretory protein (240 aa).

The first 19 residues, 1-19 (MIAFIVLPILAAVLQQSSG), serve as a signal peptide directing secretion. The SCP domain maps to 38 to 166 (VDLHNSLRRS…EYSYFYVCQY (129 aa)). Disulfide bonds link Cys-75/Cys-153, Cys-92/Cys-167, Cys-148/Cys-164, Cys-186/Cys-193, Cys-189/Cys-198, Cys-202/Cys-235, Cys-211/Cys-229, and Cys-220/Cys-233. In terms of domain architecture, ShKT spans 202–235 (CTKEDKYSNCKSLVQQAGCQDKQMQSDCSAICFC).

Belongs to the CRISP family. As to expression, expressed by the venom gland.

The protein resides in the secreted. In terms of biological role, weakly blocks contraction of smooth muscle elicited by high potassium-induced depolarization, but does not block caffeine-stimulated contraction. May target voltage-gated calcium channels on smooth muscle. In Crotalus adamanteus (Eastern diamondback rattlesnake), this protein is Cysteine-rich secretory protein.